Consider the following 331-residue polypeptide: Centriolar satellite-associated tubulin polyglutamylase complex regulator 1 (331 aa).

The segment at 1–111 (MLSPERLALP…HCLLQLLCPD (111 aa)) is required for interaction with PCM1. A required for interaction with TPGS1, LRRC49, and TTLL1 region spans residues 1–225 (MLSPERLALP…SCPPPALVKE (225 aa)). Residues 112-331 (FPLELTQKAA…STEETDESET (220 aa)) are required for interaction with TPGS2. A disordered region spans residues 288 to 331 (SPEASCLPSRTPPRVGSPWRPLHHSRKVDGESDGSTEETDESET). Residues 318–331 (ESDGSTEETDESET) are compositionally biased toward acidic residues. Position 319 is a phosphoserine (serine 319).

The protein belongs to the CSTPP1 family. Interacts with PCM1. Interacts with TTLL1, TPGS1, TPGS2 and LRRC49; the interactions link CSTPP1 to the complex TPGC. Binds to alpha-tubulin.

The protein localises to the cytoplasm. It is found in the cytoskeleton. The protein resides in the microtubule organizing center. Its subcellular location is the centrosome. It localises to the centriolar satellite. Its function is as follows. Regulator of the tubulin polyglutamylase complex (TPGC) that controls cytoskeletal organization, nuclear shape, and cilium disassembly by balancing microtubule and actin assembly. Regulates the assembly and stability of the TPGC and thereby modulates polyglutamylation of the microtubule, which antagonizes MAP4 binding. This is Centriolar satellite-associated tubulin polyglutamylase complex regulator 1 (CSTPP1) from Pongo abelii (Sumatran orangutan).